Here is a 321-residue protein sequence, read N- to C-terminus: uncharacterized protein (321 aa).

The Extracellular portion of the chain corresponds to 1–6 (MDIIRK). Residues 7–29 (ISHFAGQTFGIWVIVFAVLGFSF) traverse the membrane as a helical segment. The Cytoplasmic segment spans residues 30–34 (PSLFT). Residues 35 to 57 (WISSYITIFLGIIMFGMGLTLQA) form a helical membrane-spanning segment. Residues 58 to 69 (DDFKELVRKPWQ) lie on the Extracellular side of the membrane. The chain crosses the membrane as a helical span at residues 70–92 (VIIGVIAQYTIMPLVAFGLAFGL). Topologically, residues 93-97 (HLPAE) are cytoplasmic. The helical transmembrane segment at 98-120 (IAVGVILVGCCPGGTASNVMTFL) threads the bilayer. Residues 121 to 129 (AKGNTALSV) lie on the Extracellular side of the membrane. The chain crosses the membrane as a helical span at residues 130–150 (AVTTISTLLAPVVTPLLIMLF). Residues 151–159 (AKEWLPVSP) are Cytoplasmic-facing. Residues 160-180 (GSLFISILQAVLFPIIAGLIV) form a helical membrane-spanning segment. The Extracellular portion of the chain corresponds to 181 to 190 (KMFFRKQVAK). The chain crosses the membrane as a helical span at residues 191-211 (AVHALPLVSVIGIVAIVSAVV). Topologically, residues 212-221 (SGNRENLLQS) are cytoplasmic. A helical transmembrane segment spans residues 222 to 242 (GLLIFSVVILHNGIGYLLGFL). The Extracellular portion of the chain corresponds to 243 to 267 (CAKLLKMDYPSQKAIAIEVGMQNSG). A helical membrane pass occupies residues 268-288 (LGAALATAHFSPLSAVPSAIF). Residues 289–321 (SVWHNLSGSMLATYWSKKVKKKQAGSKSSNLSL) are Cytoplasmic-facing.

The protein belongs to the bile acid:sodium symporter (BASS) (TC 2.A.28) family.

It is found in the cell membrane. This is an uncharacterized protein from Bacillus subtilis (strain 168).